We begin with the raw amino-acid sequence, 241 residues long: MVSFSKNKVLSAAVFASVLLLDNNNSEFNNNLFSKNAKGLNSNKRLLHESQAHAGDAHHAHHVADAHHAHHVADAHHAHHAANAHHAANAHHAANAHHAANAHHAANAHHAANAHHAANAHHAANAHHAANAHHAANAHHAANAHHAANAHHAANAHHAADANHGFHFNLHDNNSHTLHHAKANACFDDSHHDDAHHDGAHHDDAHHDGAHHDDAHHDGAHHDGAHHDGAHHNATTHHLHH.

The signal sequence occupies residues 1–21 (MVSFSKNKVLSAAVFASVLLL). Over residues 52-76 (AHAGDAHHAHHVADAHHAHHVADAH) the composition is skewed to basic and acidic residues. Disordered regions lie at residues 52-145 (AHAG…ANAH) and 195-241 (AHHD…HLHH). Over residues 84-145 (AHHAANAHHA…ANAHHAANAH (62 aa)) the composition is skewed to low complexity. Residues 195–231 (AHHDGAHHDDAHHDGAHHDDAHHDGAHHDGAHHDGAH) show a composition bias toward basic and acidic residues.

The chain is Histidine-rich protein PFHRP-III from Plasmodium falciparum.